A 485-amino-acid polypeptide reads, in one-letter code: Probable glycine dehydrogenase (decarboxylating) subunit 2 (485 aa).

Lysine 269 is modified (N6-(pyridoxal phosphate)lysine).

It belongs to the GcvP family. C-terminal subunit subfamily. The glycine cleavage system is composed of four proteins: P, T, L and H. In this organism, the P 'protein' is a heterodimer of two subunits. The cofactor is pyridoxal 5'-phosphate.

It carries out the reaction N(6)-[(R)-lipoyl]-L-lysyl-[glycine-cleavage complex H protein] + glycine + H(+) = N(6)-[(R)-S(8)-aminomethyldihydrolipoyl]-L-lysyl-[glycine-cleavage complex H protein] + CO2. In terms of biological role, the glycine cleavage system catalyzes the degradation of glycine. The P protein binds the alpha-amino group of glycine through its pyridoxal phosphate cofactor; CO(2) is released and the remaining methylamine moiety is then transferred to the lipoamide cofactor of the H protein. This Chlorobium phaeovibrioides (strain DSM 265 / 1930) (Prosthecochloris vibrioformis (strain DSM 265)) protein is Probable glycine dehydrogenase (decarboxylating) subunit 2.